We begin with the raw amino-acid sequence, 396 residues long: Elongation factor Tu (396 aa).

Residues 10 to 206 (KPHVNVGTIG…ALDSYIPEPE (197 aa)) enclose the tr-type G domain. Positions 19-26 (GHVDHGKT) are G1. 19-26 (GHVDHGKT) is a GTP binding site. Position 26 (Thr26) interacts with Mg(2+). Residues 60–64 (GITIN) are G2. Residues 81-84 (DCPG) form a G3 region. Residues 81–85 (DCPGH) and 136–139 (NKAD) each bind GTP. Residues 136-139 (NKAD) are G4. The segment at 174 to 176 (SAL) is G5.

The protein belongs to the TRAFAC class translation factor GTPase superfamily. Classic translation factor GTPase family. EF-Tu/EF-1A subfamily. As to quaternary structure, monomer.

It is found in the cytoplasm. It carries out the reaction GTP + H2O = GDP + phosphate + H(+). Its function is as follows. GTP hydrolase that promotes the GTP-dependent binding of aminoacyl-tRNA to the A-site of ribosomes during protein biosynthesis. This chain is Elongation factor Tu, found in Nitrosomonas europaea (strain ATCC 19718 / CIP 103999 / KCTC 2705 / NBRC 14298).